Consider the following 449-residue polypeptide: Alginate biosynthesis transcriptional regulatory protein AlgB (449 aa).

The region spanning 10–124 (RILLVDDESA…QLRLAAAKQL (115 aa)) is the Response regulatory domain. Aspartate 59 is subject to 4-aspartylphosphate. Positions 147–376 (LESHSPAMAA…LRNVIERASI (230 aa)) constitute a Sigma-54 factor interaction domain. Residues 175 to 182 (GESGSGKG) and 238 to 247 (ADGGTLFLDE) contribute to the ATP site. The segment at residues 426 to 445 (LDQAAKTLGIDASTLYRKRK) is a DNA-binding region (H-T-H motif).

Phosphorylated by KinB.

The protein operates within glycan biosynthesis; alginate biosynthesis [regulation]. Functionally, member of the two-component regulatory system AlgB/KinB involved in regulation of alginate biosynthesis genes. Positive regulator of the alginate biosynthetic gene AlgD. In Pseudomonas aeruginosa (strain ATCC 15692 / DSM 22644 / CIP 104116 / JCM 14847 / LMG 12228 / 1C / PRS 101 / PAO1), this protein is Alginate biosynthesis transcriptional regulatory protein AlgB (algB).